Consider the following 333-residue polypeptide: Glycogenin-1 (333 aa).

An N-acetylthreonine modification is found at Thr2. Residues Leu9, Thr11, Asn12, and Tyr15 each coordinate UDP. 4 residues coordinate UDP-alpha-D-glucose: Leu9, Thr11, Asn12, and Tyr15. A Phosphoserine modification is found at Ser44. Arg77 is a binding site for UDP. 10 residues coordinate UDP-alpha-D-glucose: Arg77, Lys86, Asp102, Ala103, Asp104, Asn133, Ser134, Asp160, Asp163, and Gln164. UDP contacts are provided by Asp102, Ala103, and Asp104. Residue Asp102 coordinates Mn(2+). A Mn(2+)-binding site is contributed by Asp104. O-linked (Glc...) tyrosine glycosylation occurs at Tyr195. His212, Gly215, and Lys218 together coordinate UDP. A Mn(2+)-binding site is contributed by His212. Gly215 and Lys218 together coordinate UDP-alpha-D-glucose. Positions 284–316 are interaction with GYS1; it reads SDLSFGEAPAAPQPSMSSEERKERWEQGQADYM. The disordered stretch occupies residues 290 to 316; that stretch reads EAPAAPQPSMSSEERKERWEQGQADYM.

The protein belongs to the glycosyltransferase 8 family. Glycogenin subfamily. Part of the GYS1-GYG1 complex, a heterooctamer composed of a tetramer of GYS1 and 2 dimers of GYG1, where each GYS1 protomer binds to one GYG1 subunit (via GYG1 C-terminus); the GYS1 tetramer may dissociate from GYG1 dimers to continue glycogen polymerization on its own. May also form a heterooctamer complex with GYS2. It depends on Mn(2+) as a cofactor. In terms of processing, self-glycosylated by the transfer of glucose residues from UDP-glucose to itself, forming an alpha-1,4-glycan of around 10 residues attached to Tyr-195. Phosphorylated. Skeletal muscle, heart, to a lesser extent in kidney, lung and brain.

It localises to the cytoplasm. Its subcellular location is the nucleus. It carries out the reaction L-tyrosyl-[glycogenin] + UDP-alpha-D-glucose = alpha-D-glucosyl-L-tyrosyl-[glycogenin] + UDP + H(+). The enzyme catalyses [1,4-alpha-D-glucosyl](n)-L-tyrosyl-[glycogenin] + UDP-alpha-D-glucose = [1,4-alpha-D-glucosyl](n+1)-L-tyrosyl-[glycogenin] + UDP + H(+). It functions in the pathway glycan biosynthesis; glycogen biosynthesis. Functionally, glycogenin participates in the glycogen biosynthetic process along with glycogen synthase and glycogen branching enzyme. It catalyzes the formation of a short alpha (1,4)-glucosyl chain covalently attached via a glucose 1-O-tyrosyl linkage to internal tyrosine residues and these chains act as primers for the elongation reaction catalyzed by glycogen synthase. The sequence is that of Glycogenin-1 from Mus musculus (Mouse).